Reading from the N-terminus, the 276-residue chain is Shikimate dehydrogenase (NADP(+)) (276 aa).

Shikimate is bound by residues Ser18–Ser20 and Thr65. Catalysis depends on Lys69, which acts as the Proton acceptor. Glu81 is a binding site for NADP(+). Shikimate-binding residues include Asn90 and Asp106. NADP(+) is bound by residues Gly130–Ala134, Asn154–Lys159, and Met217. Tyr219 is a shikimate binding site. An NADP(+)-binding site is contributed by Gly241.

Belongs to the shikimate dehydrogenase family. Homodimer.

It catalyses the reaction shikimate + NADP(+) = 3-dehydroshikimate + NADPH + H(+). It functions in the pathway metabolic intermediate biosynthesis; chorismate biosynthesis; chorismate from D-erythrose 4-phosphate and phosphoenolpyruvate: step 4/7. Its function is as follows. Involved in the biosynthesis of the chorismate, which leads to the biosynthesis of aromatic amino acids. Catalyzes the reversible NADPH linked reduction of 3-dehydroshikimate (DHSA) to yield shikimate (SA). This Vibrio atlanticus (strain LGP32) (Vibrio splendidus (strain Mel32)) protein is Shikimate dehydrogenase (NADP(+)).